The chain runs to 230 residues: 2-phytyl-1,4-naphtoquinone methyltransferase (230 aa).

Belongs to the class I-like SAM-binding methyltransferase superfamily. MenG/UbiE family.

The catalysed reaction is demethylphylloquinol + S-adenosyl-L-methionine = phylloquinol + S-adenosyl-L-homocysteine + H(+). It participates in cofactor biosynthesis; phylloquinone biosynthesis. In terms of biological role, methyltransferase required for the conversion of 2-phytyl-1,4-beta-naphthoquinol to phylloquinol. This chain is 2-phytyl-1,4-naphtoquinone methyltransferase, found in Nostoc punctiforme (strain ATCC 29133 / PCC 73102).